Consider the following 424-residue polypeptide: Serine--tRNA ligase (424 aa).

Over residues 1 to 15 the composition is skewed to basic and acidic residues; it reads MIDPKLLRTDPDAVR. Residues 1–27 form a disordered region; the sequence is MIDPKLLRTDPDAVRRSQAARGEDSSV. 230-232 lines the L-serine pocket; it reads TSE. Residues 261 to 263 and V277 contribute to the ATP site; that span reads RRE. Residue E284 coordinates L-serine. Residue 348–351 participates in ATP binding; it reads EITS. T382 is an L-serine binding site.

It belongs to the class-II aminoacyl-tRNA synthetase family. Type-1 seryl-tRNA synthetase subfamily. As to quaternary structure, homodimer. The tRNA molecule binds across the dimer.

The protein resides in the cytoplasm. The catalysed reaction is tRNA(Ser) + L-serine + ATP = L-seryl-tRNA(Ser) + AMP + diphosphate + H(+). The enzyme catalyses tRNA(Sec) + L-serine + ATP = L-seryl-tRNA(Sec) + AMP + diphosphate + H(+). It functions in the pathway aminoacyl-tRNA biosynthesis; selenocysteinyl-tRNA(Sec) biosynthesis; L-seryl-tRNA(Sec) from L-serine and tRNA(Sec): step 1/1. Its function is as follows. Catalyzes the attachment of serine to tRNA(Ser). Is also able to aminoacylate tRNA(Sec) with serine, to form the misacylated tRNA L-seryl-tRNA(Sec), which will be further converted into selenocysteinyl-tRNA(Sec). The polypeptide is Serine--tRNA ligase (Cutibacterium acnes (strain DSM 16379 / KPA171202) (Propionibacterium acnes)).